The sequence spans 318 residues: MSKVRVCFLGTPEFAVTSLKALLSDEHFEVVGVVTQPDRPAGRKLQLTPSPVKALAQAHNLKVLAPESLKANPLMLQEIKTWGAEVAVVVAFGQILTQEFLDSFRFGCVNVHGSVLPRWRGAAPIQRAIEAGDVESGVTLQKMVKKLDAGDIIGIRRVKITPDMNALQLHDVLAQLGAELLQVELMDYVRGNLAPTPQDESKVTLAKKIEKMESQIDWSTSAKAIDGKIRGFVYGPGTYTFLQGKKLKLHRATVTRDGGSIGSAKPGTITAVHEDHISVATGDGVLQLFEVQPESRNRMAIADFLKGHALKVGDQLGV.

114–117 (SVLP) is a (6S)-5,6,7,8-tetrahydrofolate binding site.

Belongs to the Fmt family.

It carries out the reaction L-methionyl-tRNA(fMet) + (6R)-10-formyltetrahydrofolate = N-formyl-L-methionyl-tRNA(fMet) + (6S)-5,6,7,8-tetrahydrofolate + H(+). Functionally, attaches a formyl group to the free amino group of methionyl-tRNA(fMet). The formyl group appears to play a dual role in the initiator identity of N-formylmethionyl-tRNA by promoting its recognition by IF2 and preventing the misappropriation of this tRNA by the elongation apparatus. In Bdellovibrio bacteriovorus (strain ATCC 15356 / DSM 50701 / NCIMB 9529 / HD100), this protein is Methionyl-tRNA formyltransferase.